Here is a 200-residue protein sequence, read N- to C-terminus: Holliday junction branch migration complex subunit RuvA (200 aa).

Residues 1 to 63 (MYAYIKGTLT…EDAQLLYGFI (63 aa)) form a domain I region. Residues 64–142 (NQEEKDMFLS…INDVDSSQIL (79 aa)) are domain II. The tract at residues 143-149 (NTDTQDH) is flexible linker. Residues 150–200 (ANAPIIKEALLALEALGYSKRELTKVEKSLSKETFDSVDDAVKRGLQLLIA) are domain III.

Belongs to the RuvA family. In terms of assembly, homotetramer. Forms an RuvA(8)-RuvB(12)-Holliday junction (HJ) complex. HJ DNA is sandwiched between 2 RuvA tetramers; dsDNA enters through RuvA and exits via RuvB. An RuvB hexamer assembles on each DNA strand where it exits the tetramer. Each RuvB hexamer is contacted by two RuvA subunits (via domain III) on 2 adjacent RuvB subunits; this complex drives branch migration. In the full resolvosome a probable DNA-RuvA(4)-RuvB(12)-RuvC(2) complex forms which resolves the HJ.

The protein localises to the cytoplasm. Functionally, the RuvA-RuvB-RuvC complex processes Holliday junction (HJ) DNA during genetic recombination and DNA repair, while the RuvA-RuvB complex plays an important role in the rescue of blocked DNA replication forks via replication fork reversal (RFR). RuvA specifically binds to HJ cruciform DNA, conferring on it an open structure. The RuvB hexamer acts as an ATP-dependent pump, pulling dsDNA into and through the RuvAB complex. HJ branch migration allows RuvC to scan DNA until it finds its consensus sequence, where it cleaves and resolves the cruciform DNA. This chain is Holliday junction branch migration complex subunit RuvA, found in Staphylococcus saprophyticus subsp. saprophyticus (strain ATCC 15305 / DSM 20229 / NCIMB 8711 / NCTC 7292 / S-41).